Here is a 576-residue protein sequence, read N- to C-terminus: RING finger and SPRY domain-containing protein 1 (576 aa).

The first 16 residues, 1-16, serve as a signal peptide directing secretion; it reads MIVLGWAVFLASRSLG. Ser-50 carries the post-translational modification Phosphoserine. Positions 50–99 are disordered; that stretch reads SGTDDSVDTQQQQAENSAVPTADTRSQPRDPVRPPRRGRGPHEPRRKKQN. A compositionally biased stretch (polar residues) spans 57 to 68; that stretch reads DTQQQQAENSAV. Positions 83–97 are enriched in basic residues; that stretch reads PPRRGRGPHEPRRKK. The region spanning 300 to 483 is the B30.2/SPRY domain; that stretch reads LFLKEGRQLT…CEFNFGAKPF (184 aa). Asn-314 carries N-linked (GlcNAc...) asparagine glycosylation. Residues 527-562 form an RING-type zinc finger; it reads CSLCCDEVADTQLKPCGHSDLCMDCALQLETCPLCR.

The protein localises to the secreted. In Macaca fascicularis (Crab-eating macaque), this protein is RING finger and SPRY domain-containing protein 1 (RSPRY1).